A 119-amino-acid chain; its full sequence is UPF0344 protein lp_1373 (119 aa).

4 helical membrane-spanning segments follow: residues Met-1–Leu-21, Phe-32–Ile-52, Trp-60–Phe-80, and Leu-92–Trp-112.

Belongs to the UPF0344 family.

It localises to the cell membrane. The protein is UPF0344 protein lp_1373 of Lactiplantibacillus plantarum (strain ATCC BAA-793 / NCIMB 8826 / WCFS1) (Lactobacillus plantarum).